A 250-amino-acid chain; its full sequence is Pre-protein VI (250 aa).

Positions 1 to 33 (MEDINFASLAPRHGSRPFMGNWQDIGTSNMSGG) are excised as a propeptide. Positions 34–54 (AFSWGSLWSGIKNFGSTIKNY) are amphipathic alpha-helix essential for membrane lytic activity. The segment at 36-53 (SWGSLWSGIKNFGSTIKN) is involved in endosomal membrane lysis. Residues 48–74 (GSTIKNYGSKAWNSSTGQMLRDKLKEQ) form an interaction with hexon protein region. The Nuclear export signal motif lies at 67–76 (LRDKLKEQNF). Residues 103 to 147 (INSKLDPRPPVEEPPPAVETVSPEGRGEKRPRPDREETLVTQIDE) are disordered. Residue S124 is modified to Phosphoserine; by host. A compositionally biased stretch (basic and acidic residues) spans 127–140 (GRGEKRPRPDREET). The short motif at 131 to 135 (KRPRP) is the Nuclear localization signal element. T143 carries the post-translational modification Phosphothreonine; by host. A PPXY motif motif is present at residues 148-151 (PPSY). Low complexity predominate over residues 206 to 220 (PSRASLRRAASGPRS). A disordered region spans residues 206 to 226 (PSRASLRRAASGPRSMRPVAS). A Nuclear export signal motif is present at residues 231–242 (STLNSIVGLGVQ). Residues 233 to 239 (LNSIVGL) are interaction with hexon protein. Residues 240 to 250 (GVQSLKRRRCF) are binds to importin alpha/beta, involved in hexon nuclear import. The Nuclear localization signal signature appears at 245-248 (KRRR).

The protein belongs to the adenoviridae protein VI family. Interacts with hexon protein; this interaction allows nuclear import of hexon trimers and possibly pre-capsid assembly. Interacts (via C-terminal NLS) with importin alpha/beta. As to quaternary structure, interacts (via PPxY motif) with host NEDD4 ubiquitine ligase; this interaction might play a role in virus intracellular transport during entry. Part of a complex composed of the core-capsid bridging protein, the endosome lysis protein VI and the hexon-linking protein VIII; these interactions bridge the virus core to the capsid. Interacts with peripentonal hexons; this interaction stabilizes the capsid by gluing two peripentonal hexons together and joining them with an adjacent group-of-nine hexon. In terms of assembly, heterodimer with the viral protease; disulfide-linked. Interacts with the viral protease. Ubiquitinated by Nedd4 following partial capsid disassembly; which might play a role in intracellular virus movement during entry. Post-translationally, contains the major nuclear import and export signals. Proteolytically removed during virion maturation. The processing of the C-terminus turns the precursor into a mature viral structural protein and abrogates its ability to promote hexon import and act as a potential chaperone protein.

The protein resides in the host nucleus. It is found in the host cytoplasm. The protein localises to the virion. Functionally, during virus assembly, promotes hexon trimers nuclear import through nuclear pore complexes via an importin alpha/beta-dependent mechanism. By analogy to herpesviruses capsid assembly, might act as a chaperone to promote the formation of the icosahedral capsid. In terms of biological role, structural component of the virion that provides increased stability to the particle shell through its interaction with the core-capsid bridging protein and the hexon-linking protein VIII. Fibers shedding during virus entry into host cell allows the endosome lysis protein to be exposed as a membrane-lytic peptide. Exhibits pH-independent membrane fragmentation activity and probably mediates viral rapid escape from host endosome via organellar membrane lysis. It is not clear if it then remains partially associated with the capsid and involved in the intracellular microtubule-dependent transport of capsid to the nucleus, or if it is lost during endosomal penetration. Its function is as follows. Cofactor that activates the viral protease. Binds to viral protease in a 1:1 ratio. The polypeptide is Pre-protein VI (Human adenovirus C serotype 2 (HAdV-2)).